A 58-amino-acid chain; its full sequence is Large ribosomal subunit protein eL24 (58 aa).

4 residues coordinate Zn(2+): Cys6, Cys9, Cys32, and Cys36. Residues Cys6 to Cys36 form a C4-type zinc finger.

This sequence belongs to the eukaryotic ribosomal protein eL24 family. As to quaternary structure, part of the 50S ribosomal subunit. Forms a cluster with proteins L3 and L14. Zn(2+) is required as a cofactor.

Binds to the 23S rRNA. This is Large ribosomal subunit protein eL24 from Pyrobaculum islandicum (strain DSM 4184 / JCM 9189 / GEO3).